The primary structure comprises 503 residues: ESX-5 secretion system protein EccD5 (503 aa).

Helical transmembrane passes span 137–157, 169–189, 200–220, 224–244, 250–270, 272–292, 359–379, 414–434, 443–463, and 480–500; these read VVAV…ASGV, LTTI…MMLL, VADI…ASAP, VGSP…ALAL, RLAI…ASLS, MVAA…CVVM, FLSG…TSLC, ITLA…YALV, IVAS…AVVP, and YLCL…YAAI.

The protein belongs to the EccD/Snm4 family. As to quaternary structure, part of the ESX-5 / type VII secretion system (T7SS), which is composed of cytosolic and membrane components. The ESX-5 membrane complex is composed of EccB5, EccC5, EccD5 and EccE5.

It localises to the cell inner membrane. In terms of biological role, part of the ESX-5 specialized secretion system, which is responsible for the secretion of EsxN and a number of PE_PGRS and PPE proteins. This component is essential for ESX-5 complex stability and secretion. The protein is ESX-5 secretion system protein EccD5 of Mycobacterium marinum (strain ATCC BAA-535 / M).